Consider the following 432-residue polypeptide: D-amino acid dehydrogenase (432 aa).

3 to 17 (VVILGSGVVGVTSAW) serves as a coordination point for FAD.

It belongs to the DadA oxidoreductase family. FAD serves as cofactor.

It carries out the reaction a D-alpha-amino acid + A + H2O = a 2-oxocarboxylate + AH2 + NH4(+). The protein operates within amino-acid degradation; D-alanine degradation; NH(3) and pyruvate from D-alanine: step 1/1. Functionally, oxidative deamination of D-amino acids. The polypeptide is D-amino acid dehydrogenase (Citrobacter koseri (strain ATCC BAA-895 / CDC 4225-83 / SGSC4696)).